Consider the following 321-residue polypeptide: Tet-like dioxygenase 1 (321 aa).

Positions 198-298 constitute a Fe2OG dioxygenase domain; that stretch reads DSYYALNNCL…RIGLVYFAHK (101 aa). Residues Asn-214 and Arg-224 each coordinate 2-oxoglutarate. Fe cation contacts are provided by His-229 and Asp-231. Tyr-242 is a 2-oxoglutarate binding site. His-279 provides a ligand contact to Fe cation. Arg-289 contacts 2-oxoglutarate. Gln-310 contributes to the substrate binding site.

The cofactor is Fe(2+).

The catalysed reaction is a 5-methyl-2'-deoxycytidine in DNA + 2-oxoglutarate + O2 = a 5-hydroxymethyl-2'-deoxycytidine in DNA + succinate + CO2. It carries out the reaction a 5-hydroxymethyl-2'-deoxycytidine in DNA + 2-oxoglutarate + O2 = a 5-formyl-2'-deoxycytidine in DNA + succinate + CO2 + H2O. It catalyses the reaction a 5-formyl-2'-deoxycytidine in DNA + 2-oxoglutarate + O2 = a 5-carboxyl-2'-deoxycytidine in DNA + succinate + CO2 + H(+). Dioxygenase that catalyzes the conversion of the modified genomic base 5-methylcytosine (5mC) into 5-hydroxymethylcytosine (5hmC), and thereby plays a role in active DNA demethylation. Also mediates subsequent conversion of 5hmC into 5-formylcytosine (5fC), and conversion of 5fC to 5-carboxylcytosine (5caC). In Naegleria gruberi (Amoeba), this protein is Tet-like dioxygenase 1.